Consider the following 234-residue polypeptide: Sugar fermentation stimulation protein A (234 aa).

Residues 201–220 constitute a DNA-binding region (H-T-H motif); sequence LLSEAQNKGVEVLAYKAELS.

The protein belongs to the SfsA family.

In terms of biological role, binds to DNA non-specifically. Could be a regulatory factor involved in maltose metabolism. This Salmonella choleraesuis (strain SC-B67) protein is Sugar fermentation stimulation protein A.